A 1401-amino-acid polypeptide reads, in one-letter code: DNA-directed RNA polymerase subunit beta (1401 aa).

The protein belongs to the RNA polymerase beta chain family. As to quaternary structure, the RNAP catalytic core consists of 2 alpha, 1 beta, 1 beta' and 1 omega subunit. When a sigma factor is associated with the core the holoenzyme is formed, which can initiate transcription.

The catalysed reaction is RNA(n) + a ribonucleoside 5'-triphosphate = RNA(n+1) + diphosphate. Functionally, DNA-dependent RNA polymerase catalyzes the transcription of DNA into RNA using the four ribonucleoside triphosphates as substrates. The protein is DNA-directed RNA polymerase subunit beta of Zymomonas mobilis subsp. mobilis (strain ATCC 31821 / ZM4 / CP4).